The chain runs to 518 residues: Putative Rieske 2Fe-2S iron-sulfur protein MSMEG_6410/MSMEI_6242 (518 aa).

K375 participates in a covalent cross-link: Isoglutamyl lysine isopeptide (Lys-Gln) (interchain with Q-Cter in protein Pup). A Rieske domain is found at L431–L518. [2Fe-2S] cluster is bound by residues C471, H473, C491, and H494.

It depends on [2Fe-2S] cluster as a cofactor.

The protein is Putative Rieske 2Fe-2S iron-sulfur protein MSMEG_6410/MSMEI_6242 of Mycolicibacterium smegmatis (strain ATCC 700084 / mc(2)155) (Mycobacterium smegmatis).